The primary structure comprises 328 residues: tRNA uridine(34) hydroxylase (328 aa).

The region spanning 130 to 224 is the Rhodanese domain; the sequence is LDEDTVVLDT…YGKDPEVQGE (95 aa). Cys-184 functions as the Cysteine persulfide intermediate in the catalytic mechanism.

The protein belongs to the TrhO family.

It carries out the reaction uridine(34) in tRNA + AH2 + O2 = 5-hydroxyuridine(34) in tRNA + A + H2O. Functionally, catalyzes oxygen-dependent 5-hydroxyuridine (ho5U) modification at position 34 in tRNAs. In Streptococcus pyogenes serotype M12 (strain MGAS2096), this protein is tRNA uridine(34) hydroxylase.